The primary structure comprises 284 residues: Bifunctional protein FolD (284 aa).

NADP(+) contacts are provided by residues 165–167 (GRS), Ser190, and Val231.

The protein belongs to the tetrahydrofolate dehydrogenase/cyclohydrolase family. In terms of assembly, homodimer.

It carries out the reaction (6R)-5,10-methylene-5,6,7,8-tetrahydrofolate + NADP(+) = (6R)-5,10-methenyltetrahydrofolate + NADPH. The catalysed reaction is (6R)-5,10-methenyltetrahydrofolate + H2O = (6R)-10-formyltetrahydrofolate + H(+). Its pathway is one-carbon metabolism; tetrahydrofolate interconversion. Catalyzes the oxidation of 5,10-methylenetetrahydrofolate to 5,10-methenyltetrahydrofolate and then the hydrolysis of 5,10-methenyltetrahydrofolate to 10-formyltetrahydrofolate. In Geobacillus thermodenitrificans (strain NG80-2), this protein is Bifunctional protein FolD.